Consider the following 1641-residue polypeptide: MRDRVAMMLRPLVRGWIPRAVLLLTVAFSFGCNRNHNGQLPQSSGEPVAVAKEPVKGFVLVRAYPDQHDGELALALEFSQPLAATQEFDTLVRLEQDSGNHDGGWSLSDDAKTLRYPYVEADKHYTVLISAGLLAATGSRLGKPRKEPVYTGELDPVVGFASRGSILPARGSRGVPVVSVNVPEVDVEFMRVREKALPAFLARYHKAGQRSSWELSNQGNSRKRLSELADPVYVTRFVLDGKKNERALTYLPIQSIRELREPGLYFAVMKPTGSFSDAFETAFFSVSNIGLHTRAYKDKLFVHTASLRSGNPYKQVDLLVLDAKGETVLQGATDDNGNALLNYTLNAGHVLVSRNGRDISILPFNQPALDLSEFAVAGRENPWFDVFAWSGRDLYRPGETLRISALLRDRDGKPVKPQPVFLRLKQPDGKTFRETRLQPAEQGYLEFTQKIPSDAPTGRWRVEFRTDPASKEAVQGLAVRVEEFLPERMKLELSSAQPVLRAKAPFTLTADAAYLYGAPAAGNRFTANLAVAVEQHPLDNMPGWFFGDATLQLPRGAKETIDITLGADGHLVHDIVLPEEAKPVSPMAVVVSGSVYESGGRPVTRSLKRVLWPADALVGVRPLFDVASGADANGMARFELTRVGVDGKPQSAKGLKATLVRELRDYHWRYSDGRWDYDFTRRFENKETRTVDISTSHTTTLALPVEWGDYRLEVFDPVTGLTMRYPFRAGWSWGDDNRGLDARPDKVKLALDKTSYRAGDTLKVTITPPHPGKGLLLVESDKPLYVQAIDANPSTTLEIPVTADWERHDVYVTALVFRGGSASNNTTPARAVGEVYVPMQRKDRRVAVGLVVPKQMRPAQSLPVTVSVPELAGKQAHVTISAVDAGILNITGFPVPDAAAHFFAQRRLSVDAYDIYGRVIESFEGGTGRLKFGGDMALPPLPQAKRPTARSQTVDLFSGAVKLDAKGNAHIQLPVPDFNGALRVSALVYSDTRYGQRDAETVVRAPILAEASMPRVMAPGDRSTVTVDVQNFTGKQGKFAVKVEGVGPLAVAEAGRSVTLGIDGKTTLNFPLRALEGNSVAQVRVRVEGNGSKAERHYDLPVRAAWPQGLRTQAHVLNVLAPIAFDPALAKGLMPDSVNARLSVSALAPIPFASVLQGVFEYPYGCAEQTASKGYAALWLDDATIKSLGIHGVTPAQRLERLEGALGRLASLQTMNGHFSMCGGNSDVNPVLTPYIAGFLLDAKDAGFAVSDAVLQKALNRLSEDLLSGAHLFYGNDQSEALMFAHQAWSGYVLARVNRAPLGTLRTLYDNERGKAVSGLSLVHLGVALSLQGDRKRGEAAIEAGFAKSEGGRPEVFGDYGSVIRDNALMIALVRAHGLAKPAYEARVMALGRDLEARRRSGWLWLSTQEQVALAQLGRALLVDQKKQVSGTLYVGKQREEIAASRLIGRSFDAAALARGVRFVPQGDVPLYASFEVAGIPRQAPVSDDSQLLVVRRWYTVDGKPWTPGPLKEGQALIVRVSVTSKQNMPDALLTDLLPAGLEIDNFNLGETRQWADVTVDGIALSERANAADIKHEEFRDDRYVAMLQLTGGRTANLFYLVRAVTPGTYKVPPSLVEDMYRPALRGTGRVAPATVTVVQP.

Residues 1-31 (MRDRVAMMLRPLVRGWIPRAVLLLTVAFSFG) form the signal peptide. A lipid anchor (N-palmitoyl cysteine) is attached at C32. A lipid anchor (S-diacylglycerol cysteine) is attached at C32. Residues 1166-1169 (CAEQ) constitute a cross-link (isoglutamyl cysteine thioester (Cys-Gln)).

This sequence belongs to the protease inhibitor I39 (alpha-2-macroglobulin) family. Bacterial alpha-2-macroglobulin subfamily.

The protein localises to the cell membrane. Its function is as follows. Protects the bacterial cell from host peptidases. In Xylella fastidiosa (strain 9a5c), this protein is Alpha-2-macroglobulin.